The following is a 171-amino-acid chain: Large ribosomal subunit protein bL9 (171 aa).

Belongs to the bacterial ribosomal protein bL9 family.

Functionally, binds to the 23S rRNA. The polypeptide is Large ribosomal subunit protein bL9 (Orientia tsutsugamushi (strain Ikeda) (Rickettsia tsutsugamushi)).